Consider the following 321-residue polypeptide: Hydrolase 3 (321 aa).

Positions 80–82 match the Involved in the stabilization of the negatively charged intermediate by the formation of the oxyanion hole motif; the sequence is HGA. Residues Ser-172 and Asp-267 contribute to the active site.

It belongs to the 'GDXG' lipolytic enzyme family.

The catalysed reaction is dihydroprecondylocarpine acetate + NADPH = (+)-vincadifformine + acetate + NADP(+). The protein operates within alkaloid biosynthesis. Component of the seco-iridoid and derivatives monoterpenoid indole alkaloids (MIAs, e.g. vincadifformine) biosynthesis pathway. Catalyzes the conversion of O-acetylstemmadenine (OAS) to vincadifformine. May also trigger the formation of additional unknown MIAs. This is Hydrolase 3 from Catharanthus roseus (Madagascar periwinkle).